Consider the following 128-residue polypeptide: Sulfurtransferase TusD (128 aa).

The active-site Cysteine persulfide intermediate is the Cys-78.

This sequence belongs to the DsrE/TusD family. In terms of assembly, heterohexamer, formed by a dimer of trimers. The hexameric TusBCD complex contains 2 copies each of TusB, TusC and TusD. The TusBCD complex interacts with TusE.

The protein resides in the cytoplasm. Part of a sulfur-relay system required for 2-thiolation of 5-methylaminomethyl-2-thiouridine (mnm(5)s(2)U) at tRNA wobble positions. Accepts sulfur from TusA and transfers it in turn to TusE. The chain is Sulfurtransferase TusD from Salmonella arizonae (strain ATCC BAA-731 / CDC346-86 / RSK2980).